The sequence spans 465 residues: 2-methylcitrate synthase, mitochondrial (465 aa).

2 residues coordinate CoA: Arg72 and Lys190. Residue His265 participates in oxaloacetate binding. Leu300 contacts CoA. His301 is a catalytic residue. Residues Val342, Gly344, and Tyr345 each coordinate CoA. Oxaloacetate contacts are provided by His347 and Arg356. His347 is an active-site residue. Residues Thr394, Lys395, and Asn400 each contribute to the CoA site. Asp402 is a catalytic residue. Residues Arg428 and Arg448 each coordinate oxaloacetate.

It belongs to the citrate synthase family. As to quaternary structure, homodimer.

The protein resides in the mitochondrion matrix. The enzyme catalyses propanoyl-CoA + oxaloacetate + H2O = (2S,3S)-2-methylcitrate + CoA + H(+). It carries out the reaction oxaloacetate + acetyl-CoA + H2O = citrate + CoA + H(+). It functions in the pathway organic acid metabolism; propanoate degradation. With respect to regulation, activity is inhibited by p-chloromercuribenzoate (pCMB), monoiodoacetamide, H(2)O(2), ATP, ADP, NADH, NADPH, Hg(2+) and Zn(2+). In terms of biological role, component of the methylcitrate cycle that catalyzes the synthesis of (2S,3S)-2-methylcitrate from propionyl-CoA and oxaloacetate. Plays an important role in detoxification of propionyl-CoA, an inhibitor of both primary and secondary metabolism. Also has citrate synthase activity using as substrates acetyl-CoA and oxaloacetate. The sequence is that of 2-methylcitrate synthase, mitochondrial from Yarrowia lipolytica (strain CLIB 122 / E 150) (Yeast).